A 275-amino-acid chain; its full sequence is tRNA pseudouridine synthase A (275 aa).

Residue Asp62 is the Nucleophile of the active site. Tyr124 contacts substrate.

It belongs to the tRNA pseudouridine synthase TruA family. As to quaternary structure, homodimer.

The enzyme catalyses uridine(38/39/40) in tRNA = pseudouridine(38/39/40) in tRNA. Its function is as follows. Formation of pseudouridine at positions 38, 39 and 40 in the anticodon stem and loop of transfer RNAs. The sequence is that of tRNA pseudouridine synthase A from Herminiimonas arsenicoxydans.